Reading from the N-terminus, the 479-residue chain is Baeyer-Villiger monooxygenase AacuH (479 aa).

A disordered region spans residues 14 to 34; sequence DSLGHPDGASRPPVSAESLSR.

It belongs to the AflY oxidoreductase family.

Its pathway is secondary metabolite biosynthesis. Functionally, baeyer-Villiger monooxygenase; part of the gene cluster that mediates the biosynthesis of the tetrahydroxanthone dimer secalonic acid D. The pathway begins with the synthesis of atrochrysone thioester by the polyketide synthase AacuL. The atrochrysone carboxyl ACP thioesterase AacuM then breaks the thioester bond and releases the atrochrysone carboxylic acid from AacuL. Atrochrysone carboxylic acid is decarboxylated by the decarboxylase AacuI, and oxidized by the anthrone oxygenase AacuG to yield emodin. Emodin is then reduced to emodin hydroquinone by a yet unidentified oxidoreductase. A-ring reduction by the short chain dehydrogenase AacuN, dehydration by the scytalone dehydratase-like protein AacuK and probable spontaneous re-oxidation, results in overall deoxygenation to chrysophanol. Baeyer-Villiger oxidation by the Baeyer-Villiger monooxygenase (BVMO) AacuH then yields monodictyphenone. Monodictyphenone is transformed into compounds with the tetrahydroxanthone skeleton via methylesterification by the methyltransferase AacuQ, followed by the action of the flavin-dependent monooxygenase AacuC, the isomerase AacuP, and the short chain dehydrogenase/reductase AacuF or AacuD. AacuF and AacuD should accept the same compound as a substrate but perform the ketoreduction with a different stereoselectivity, thus yielding blennolides B and A, respectively. In the final step of the biosynthesis, the cytochrome P450 monooxygenase AacuE accepts blennolide B and/or blennolide A to conduct the dimerization reaction to furnish the tetrahydroxanthone dimers, secalonic acids D, B, and F. This chain is Baeyer-Villiger monooxygenase AacuH, found in Aspergillus aculeatus (strain ATCC 16872 / CBS 172.66 / WB 5094).